Consider the following 469-residue polypeptide: Adenosylhomocysteinase (469 aa).

Residues Thr-58, Asp-133, and Glu-195 each contribute to the substrate site. 196–198 (TTT) contributes to the NAD(+) binding site. The substrate site is built by Lys-225 and Asp-229. NAD(+)-binding positions include Asn-230, 259–264 (GFGDVG), Glu-282, Asn-317, 338–340 (IGH), and Asn-383.

It belongs to the adenosylhomocysteinase family. The cofactor is NAD(+).

It is found in the cytoplasm. The enzyme catalyses S-adenosyl-L-homocysteine + H2O = L-homocysteine + adenosine. It participates in amino-acid biosynthesis; L-homocysteine biosynthesis; L-homocysteine from S-adenosyl-L-homocysteine: step 1/1. In terms of biological role, may play a key role in the regulation of the intracellular concentration of adenosylhomocysteine. The protein is Adenosylhomocysteinase of Rhodopseudomonas palustris (strain TIE-1).